An 818-amino-acid polypeptide reads, in one-letter code: Cation/H(+) antiporter 6A (818 aa).

13 consecutive transmembrane segments (helical) span residues 51-71 (NFWE…FFIW), 88-110 (FTYM…KSWI), 123-143 (VAET…GVTM), 156-176 (SVIG…TFRY), 192-212 (LIIF…LKDL), 222-242 (IALS…FFNA), 248-268 (LYGF…ICVV), 288-308 (FYLY…NKVI), 310-330 (LFGP…YPLG), 340-360 (FNLG…VDLL), 376-396 (IYEV…VTTI), 409-429 (FALA…YTYA), and 438-458 (EVFT…PMLL).

Belongs to the monovalent cation:proton antiporter 2 (CPA2) transporter (TC 2.A.37) family. CHX (TC 2.A.37.4) subfamily. As to expression, preferentially expressed in pollen.

Its subcellular location is the membrane. In terms of biological role, may operate as a cation/H(+) antiporter. This chain is Cation/H(+) antiporter 6A (CHX6a), found in Arabidopsis thaliana (Mouse-ear cress).